The chain runs to 341 residues: Terpene synthase 9 (341 aa).

A DDxx(x)D/E motif motif is present at residues 81–86 (DDILDS). The NDxxSxxxD/E motif signature appears at 222–230 (NDMASYCKE).

This sequence belongs to the terpene synthase family.

The enzyme catalyses (2E,6E)-farnesyl diphosphate = (1S,2S,4R)-beta-elemene + diphosphate. It carries out the reaction (2E,6E)-farnesyl diphosphate = germacrene D + diphosphate. Its function is as follows. Terpene synthase that converts its substrate farnesyl diphosphate (FPP) into the sesquiterpenes beta-elemene, germacrene D and a yet unidentified sesquiterpene. This is Terpene synthase 9 from Dictyostelium purpureum (Slime mold).